The sequence spans 427 residues: L-rhamnose isomerase (427 aa).

3 residues coordinate Mn(2+): histidine 264, aspartate 296, and aspartate 298.

It belongs to the rhamnose isomerase family. It depends on Mn(2+) as a cofactor.

It is found in the cytoplasm. It catalyses the reaction L-rhamnopyranose = L-rhamnulose. It participates in carbohydrate degradation; L-rhamnose degradation; glycerone phosphate from L-rhamnose: step 1/3. Catalyzes the interconversion of L-rhamnose and L-rhamnulose. This is L-rhamnose isomerase from Rhodopirellula baltica (strain DSM 10527 / NCIMB 13988 / SH1).